The following is a 1463-amino-acid chain: DNA polymerase III PolC-type (1463 aa).

An Exonuclease domain is found at 425–581 (YVVFDVETTG…YDAEATGRLL (157 aa)).

Belongs to the DNA polymerase type-C family. PolC subfamily.

The protein resides in the cytoplasm. It carries out the reaction DNA(n) + a 2'-deoxyribonucleoside 5'-triphosphate = DNA(n+1) + diphosphate. Its function is as follows. Required for replicative DNA synthesis. This DNA polymerase also exhibits 3' to 5' exonuclease activity. This is DNA polymerase III PolC-type from Streptococcus suis (strain 98HAH33).